Consider the following 326-residue polypeptide: DNA-directed RNA polymerase subunit alpha (326 aa).

Residues 1–231 (MQTNLLKPKI…DQLVVFAALE (231 aa)) are alpha N-terminal domain (alpha-NTD). The interval 247-326 (VDPMLMRPVD…ESWPPANLEK (80 aa)) is alpha C-terminal domain (alpha-CTD).

The protein belongs to the RNA polymerase alpha chain family. In terms of assembly, homodimer. The RNAP catalytic core consists of 2 alpha, 1 beta, 1 beta' and 1 omega subunit. When a sigma factor is associated with the core the holoenzyme is formed, which can initiate transcription.

The catalysed reaction is RNA(n) + a ribonucleoside 5'-triphosphate = RNA(n+1) + diphosphate. In terms of biological role, DNA-dependent RNA polymerase catalyzes the transcription of DNA into RNA using the four ribonucleoside triphosphates as substrates. The chain is DNA-directed RNA polymerase subunit alpha from Polynucleobacter necessarius subsp. necessarius (strain STIR1).